The chain runs to 1554 residues: MELGSDDFLPPPECPVFEPSWAEFRDPLGYIAKIRPIAEKSGICKIRPPADWQPPFAVEVDNFRFTPRIQRLNELEAQTRVKLNYLDQIAKFWEIQGSSLKIPNVERRILDLYSLSKIVVEEGGYETICKDRRWARVAQRLNYPPGKNIGSLLRSHYERIVYPYEMYQSGANLVQCNTRPFDNEEKDKEYKPHSIPLRQSVQPSKFNSYGRRAKRLQPDPEPTEEDIEKNPELKKLQIYGAGPKMMGLGLMAKDKTLRKKDKEGPECPPTVVVKEELGGDVKMESTSPKTFLEGKEELSHSPEPCTKMTMRLRRNHSNAQFIESYVCRMCSRGDEDDKLLLCDGCDDNYHIFCLLPPLPEIPKGVWRCPKCVMAECKRPPEAFGFEQATREYTLQSFGEMADSFKADYFNMPVHMVPTELVEKEFWRLVNSIEEDVTVEYGADIHSKEFGSGFPVSDSKRHLTPEEEEYATSGWNLNVMPVLEQSVLCHINADISGMKVPWLYVGMVFSAFCWHIEDHWSYSINYLHWGEPKTWYGVPSLAAEHLEEVMKKLTPELFDSQPDLLHQLVTLMNPNTLMSHGVPVVRTNQCAGEFVITFPRAYHSGFNQGYNFAEAVNFCTADWLPAGRQCIEHYRRLRRYCVFSHEELICKMAACPEKLDLNLAAAVHKEMFIMVQEERRLRKALLEKGITEAEREAFELLPDDERQCIKCKTTCFLSALACYDCPDGLVCLSHINDLCKCSSSRQYLRYRYTLDELPAMLHKLKVRAESFDTWANKVRVALEVEDGRKRSLEELRALESEARERRFPNSELLQRLKNCLSEAEACVSRALGLVSGQEAGPDRVAGLQMTLAELRDFLGQMNNLPCAMHQIGDVKGILEQVEAYQTEAREALVSQPSSPGLLQSLLERGQQLGVEVPEAQQLQRQVEQARWLDEVKRTLAPSARRGTLAIMRGLLVAGASVAPSPAVDKAQAELQELLTIAERWEEKAHLCLEARQKHPPATLEAIIHEAENIPVHLPNIQSLKEALAKARAWIADVDEIQNGDHYPCLDDLEGLVAVGRDLPVGLEELRQLELQVLTAHSWREKASKTFLKKNSCYTLLEVLCPCADAGSDSTKRSRWMEKELGLYKSDTELLGLSAQDLRDPGSVIVAFKEGEQKEKEGILQLRRTNSAKPSPLALLTTASSTASICVCGQVPAGVGALQCDLCQDWFHGRCVTVPRLLSSQRSSLPSSPLLAWWEWDTKFLCPLCMRSRRPRLETILALLVALQRLPVRLPEGEALQCLTERAISWQGRARQVLASEEVTALLGRLAELRQRLQAESKPEESLAYPSDGGEGTGNMPKVQGLLENGDSVTSPEKVATEEGSGKRDLELLSSILPQLSGPVLELPEATRAPLEELMMEGDLLEVTLDENHSIWQLLQAGQPPDLKRVQTLLELEKAERHGSRTRGRALERRRRRKVDRGGEPDDPAREELEPKRVRSSGPEAEEVQEEEELEEETGGEVPPVPFPNSGSPSIQEDQDGLEPVLEAGSDTSAPFSTLTSRLLMSCPQQPSLQQL.

In terms of domain architecture, JmjN spans 14 to 55 (CPVFEPSWAEFRDPLGYIAKIRPIAEKSGICKIRPPADWQPP). Positions 79–169 (TRVKLNYLDQ…IVYPYEMYQS (91 aa)) constitute an ARID domain. Residues 197-207 (LRQSVQPSKFN) show a composition bias toward polar residues. The segment at 197–227 (LRQSVQPSKFNSYGRRAKRLQPDPEPTEEDI) is disordered. Residues Lys-205, Lys-229, Lys-244, and Lys-274 each participate in a glycyl lysine isopeptide (Lys-Gly) (interchain with G-Cter in SUMO2) cross-link. Positions 284-303 (ESTSPKTFLEGKEELSHSPE) are disordered. At Ser-287 the chain carries Phosphoserine. Lys-295 participates in a covalent cross-link: Glycyl lysine isopeptide (Lys-Gly) (interchain with G-Cter in SUMO2). Ser-301 and Ser-317 each carry phosphoserine. A PHD-type 1 zinc finger spans residues 326–372 (VCRMCSRGDEDDKLLLCDGCDDNYHIFCLLPPLPEIPKGVWRCPKCV). In terms of domain architecture, JmjC spans 468–634 (EYATSGWNLN…AGRQCIEHYR (167 aa)). 3 residues coordinate Fe cation: His-514, Asp-517, and His-602. Phosphoserine is present on residues Ser-893 and Ser-897. Residue Lys-1127 forms a Glycyl lysine isopeptide (Lys-Gly) (interchain with G-Cter in SUMO2) linkage. Residues 1187–1248 (ICVCGQVPAG…DTKFLCPLCM (62 aa)) form a PHD-type 2 zinc finger. Disordered regions lie at residues 1319 to 1364 (SKPE…EGSG) and 1437 to 1535 (AERH…APFS). Position 1353 is a phosphoserine (Ser-1353). Basic residues predominate over residues 1442–1457 (SRTRGRALERRRRRKV). A compositionally biased stretch (basic and acidic residues) spans 1458 to 1475 (DRGGEPDDPAREELEPKR). Residues 1482-1497 (EAEEVQEEEELEEETG) are compositionally biased toward acidic residues.

This sequence belongs to the JARID1 histone demethylase family. In terms of assembly, part of two distinct complexes, one containing E2F6, and the other containing REST. Interacts with ZMYND8. It depends on Fe(2+) as a cofactor.

Its subcellular location is the nucleus. The enzyme catalyses N(6),N(6),N(6)-trimethyl-L-lysyl(4)-[histone H3] + 3 2-oxoglutarate + 3 O2 = L-lysyl(4)-[histone H3] + 3 formaldehyde + 3 succinate + 3 CO2. Functionally, histone demethylase that specifically demethylates 'Lys-4' of histone H3, thereby playing a central role in histone code. Does not demethylate histone H3 'Lys-9', H3 'Lys-27', H3 'Lys-36', H3 'Lys-79' or H4 'Lys-20'. Demethylates trimethylated and dimethylated but not monomethylated H3 'Lys-4'. Participates in transcriptional repression of neuronal genes by recruiting histone deacetylases and REST at neuron-restrictive silencer elements. Represses the CLOCK-BMAL1 heterodimer-mediated transcriptional activation of the core clock component PER2. This chain is Lysine-specific demethylase 5C (Kdm5c), found in Mus musculus (Mouse).